We begin with the raw amino-acid sequence, 414 residues long: Methylthioribose-1-phosphate isomerase (414 aa).

The span at 205-215 (SQSQGSENPPS) shows a compositional bias: polar residues. The disordered stretch occupies residues 205–224 (SQSQGSENPPSKKQKKDAAP). Catalysis depends on Asp-283, which acts as the Proton donor.

It belongs to the eIF-2B alpha/beta/delta subunits family. MtnA subfamily.

The protein localises to the cytoplasm. It localises to the nucleus. It carries out the reaction 5-(methylsulfanyl)-alpha-D-ribose 1-phosphate = 5-(methylsulfanyl)-D-ribulose 1-phosphate. The protein operates within amino-acid biosynthesis; L-methionine biosynthesis via salvage pathway; L-methionine from S-methyl-5-thio-alpha-D-ribose 1-phosphate: step 1/6. Catalyzes the interconversion of methylthioribose-1-phosphate (MTR-1-P) into methylthioribulose-1-phosphate (MTRu-1-P). The polypeptide is Methylthioribose-1-phosphate isomerase (Zygosaccharomyces rouxii (strain ATCC 2623 / CBS 732 / NBRC 1130 / NCYC 568 / NRRL Y-229)).